The sequence spans 139 residues: ATP synthase epsilon chain (139 aa).

This sequence belongs to the ATPase epsilon chain family. In terms of assembly, F-type ATPases have 2 components, CF(1) - the catalytic core - and CF(0) - the membrane proton channel. CF(1) has five subunits: alpha(3), beta(3), gamma(1), delta(1), epsilon(1). CF(0) has three main subunits: a, b and c.

It is found in the cell inner membrane. Produces ATP from ADP in the presence of a proton gradient across the membrane. The sequence is that of ATP synthase epsilon chain from Pseudomonas putida (strain ATCC 47054 / DSM 6125 / CFBP 8728 / NCIMB 11950 / KT2440).